A 132-amino-acid polypeptide reads, in one-letter code: Small ribosomal subunit protein uS8 (132 aa).

The protein belongs to the universal ribosomal protein uS8 family. In terms of assembly, part of the 30S ribosomal subunit. Contacts proteins S5 and S12.

Functionally, one of the primary rRNA binding proteins, it binds directly to 16S rRNA central domain where it helps coordinate assembly of the platform of the 30S subunit. The protein is Small ribosomal subunit protein uS8 of Xylella fastidiosa (strain 9a5c).